Consider the following 232-residue polypeptide: Flagellar L-ring protein (232 aa).

The first 15 residues, 1–15, serve as a signal peptide directing secretion; sequence MKKVLFYVLPFAFFG. The N-palmitoyl cysteine moiety is linked to residue cysteine 16. Cysteine 16 carries S-diacylglycerol cysteine lipidation.

The protein belongs to the FlgH family. In terms of assembly, the basal body constitutes a major portion of the flagellar organelle and consists of four rings (L,P,S, and M) mounted on a central rod.

It localises to the cell outer membrane. The protein resides in the bacterial flagellum basal body. Its function is as follows. Assembles around the rod to form the L-ring and probably protects the motor/basal body from shearing forces during rotation. The polypeptide is Flagellar L-ring protein (Campylobacter jejuni subsp. doylei (strain ATCC BAA-1458 / RM4099 / 269.97)).